Here is an 811-residue protein sequence, read N- to C-terminus: Protein VAC14 homolog (811 aa).

7 HEAT repeats span residues 81–119, 122–160, 240–278, 334–372, 375–412, 431–469, and 472–510; these read DSYM…VAKG, FRYF…IVMQ, ISYL…EIQK, QIDY…IAPK, LLQI…LVSK, SVDF…RTGG, and INMH…SHKS. Positions 775–785 are enriched in low complexity; it reads TSASGITTTAS. The segment at 775 to 811 is disordered; that stretch reads TSASGITTTASNSRDSFITRLPPTAALSTGARKKPKQ.

The protein belongs to the VAC14 family. As to quaternary structure, component of the PI(3,5)P2 regulatory complex, composed of ATG18, FIG4, FAB1, VAC14 and VAC7. VAC14 nucleates the assembly of the complex and serves as a scaffold.

It is found in the cytoplasm. Its subcellular location is the vacuole membrane. The PI(3,5)P2 regulatory complex regulates both the synthesis and turnover of phosphatidylinositol 3,5-bisphosphate (PtdIns(3,5)P2). Regulates the synthesis of PtdIns(3,5)P2 by positive activation of FAB1 and by controlling FIG4 localization. In Schizosaccharomyces pombe (strain 972 / ATCC 24843) (Fission yeast), this protein is Protein VAC14 homolog.